The following is a 93-amino-acid chain: Putative defensin-like protein 283 (93 aa).

A signal peptide spans 1–24 (MTKIGFYLATYATIYIILSPGLLA). 3 cysteine pairs are disulfide-bonded: Cys43–Cys83, Cys66–Cys90, and Cys72–Cys92.

It belongs to the DEFL family.

Its subcellular location is the secreted. The protein is Putative defensin-like protein 283 of Arabidopsis thaliana (Mouse-ear cress).